A 27-amino-acid polypeptide reads, in one-letter code: Protein YqfI (27 aa).

This chain is Protein YqfI, found in Escherichia coli (strain K12).